The chain runs to 208 residues: CASP-like protein 3A1 (208 aa).

Composition is skewed to polar residues over residues 1 to 11 (MGSFANGQNGS) and 17 to 33 (TPAT…TTSA). The tract at residues 1–33 (MGSFANGQNGSELGIQTPATGSNAALEPPTTSA) is disordered. Residues 1–43 (MGSFANGQNGSELGIQTPATGSNAALEPPTTSAAAPRCPRLGM) are Cytoplasmic-facing. The helical transmembrane segment at 44–64 (AMVAARAAALVMALLSVSLMV) threads the bilayer. The Extracellular portion of the chain corresponds to 65–92 (SAKQRGTLAIFGIEIPLYAKWSLSDSLQ). The helical transmembrane segment at 93-113 (SLVGISAAAAAYSLAQLLSIA) threads the bilayer. Residues 114-128 (HTALKKAPVVPSRRY) are Cytoplasmic-facing. A helical transmembrane segment spans residues 129–149 (AWMLLAGDQVFAYAMLSAGSA). The Extracellular portion of the chain corresponds to 150–183 (AAAVANLNRTGVRHTALPNFCKPLPRFCDLSAAS). Asparagine 157 is a glycosylation site (N-linked (GlcNAc...) asparagine). The chain crosses the membrane as a helical span at residues 184-204 (IACAFLGCAFLAASAVIDVIW). Over 205–208 (LSRL) the chain is Cytoplasmic.

This sequence belongs to the Casparian strip membrane proteins (CASP) family. As to quaternary structure, homodimer and heterodimers.

The protein localises to the cell membrane. The protein is CASP-like protein 3A1 of Hordeum vulgare subsp. vulgare (Domesticated barley).